The following is a 340-amino-acid chain: Uroporphyrinogen decarboxylase (340 aa).

Substrate contacts are provided by residues Arg23–Arg27, Asp72, Tyr147, Thr202, and His316.

The protein belongs to the uroporphyrinogen decarboxylase family. Homodimer.

The protein resides in the cytoplasm. The catalysed reaction is uroporphyrinogen III + 4 H(+) = coproporphyrinogen III + 4 CO2. The protein operates within porphyrin-containing compound metabolism; protoporphyrin-IX biosynthesis; coproporphyrinogen-III from 5-aminolevulinate: step 4/4. Functionally, catalyzes the decarboxylation of four acetate groups of uroporphyrinogen-III to yield coproporphyrinogen-III. The protein is Uroporphyrinogen decarboxylase of Trichlorobacter lovleyi (strain ATCC BAA-1151 / DSM 17278 / SZ) (Geobacter lovleyi).